We begin with the raw amino-acid sequence, 45 residues long: uncharacterized protein (45 aa).

The segment at 2 to 25 adopts a C2H2-type zinc-finger fold; sequence YQCLRCGGIFNKRREVVEHLLVGH.

This is an uncharacterized protein from Sulfolobus spindle-shape virus 1 (SSV1).